The chain runs to 355 residues: Protein RecA (355 aa).

An ATP-binding site is contributed by 73–80 (GPESSGKT).

This sequence belongs to the RecA family.

It is found in the cytoplasm. Its function is as follows. Can catalyze the hydrolysis of ATP in the presence of single-stranded DNA, the ATP-dependent uptake of single-stranded DNA by duplex DNA, and the ATP-dependent hybridization of homologous single-stranded DNAs. It interacts with LexA causing its activation and leading to its autocatalytic cleavage. This chain is Protein RecA, found in Solidesulfovibrio magneticus (strain ATCC 700980 / DSM 13731 / RS-1) (Desulfovibrio magneticus).